Consider the following 452-residue polypeptide: Bifunctional protein GlmU (452 aa).

The interval Met1–Arg226 is pyrophosphorylase. Residues Leu8 to Gly11, Lys22, Gln73, Gly78 to Thr79, Tyr99 to Asp101, Gly136, Glu151, Asn166, and Asn224 each bind UDP-N-acetyl-alpha-D-glucosamine. Asp101 contacts Mg(2+). Residue Asn224 participates in Mg(2+) binding. The interval Val227–Asp247 is linker. The N-acetyltransferase stretch occupies residues Gly248–Gly452. UDP-N-acetyl-alpha-D-glucosamine contacts are provided by Arg330 and Lys348. The active-site Proton acceptor is the His360. UDP-N-acetyl-alpha-D-glucosamine contacts are provided by Tyr363 and Asn374. Acetyl-CoA is bound by residues Ala377, Asn383–Tyr384, Ser402, Ala420, and Arg437.

In the N-terminal section; belongs to the N-acetylglucosamine-1-phosphate uridyltransferase family. This sequence in the C-terminal section; belongs to the transferase hexapeptide repeat family. In terms of assembly, homotrimer. Mg(2+) serves as cofactor.

It is found in the cytoplasm. It carries out the reaction alpha-D-glucosamine 1-phosphate + acetyl-CoA = N-acetyl-alpha-D-glucosamine 1-phosphate + CoA + H(+). The enzyme catalyses N-acetyl-alpha-D-glucosamine 1-phosphate + UTP + H(+) = UDP-N-acetyl-alpha-D-glucosamine + diphosphate. It functions in the pathway nucleotide-sugar biosynthesis; UDP-N-acetyl-alpha-D-glucosamine biosynthesis; N-acetyl-alpha-D-glucosamine 1-phosphate from alpha-D-glucosamine 6-phosphate (route II): step 2/2. It participates in nucleotide-sugar biosynthesis; UDP-N-acetyl-alpha-D-glucosamine biosynthesis; UDP-N-acetyl-alpha-D-glucosamine from N-acetyl-alpha-D-glucosamine 1-phosphate: step 1/1. The protein operates within bacterial outer membrane biogenesis; LPS lipid A biosynthesis. Its function is as follows. Catalyzes the last two sequential reactions in the de novo biosynthetic pathway for UDP-N-acetylglucosamine (UDP-GlcNAc). The C-terminal domain catalyzes the transfer of acetyl group from acetyl coenzyme A to glucosamine-1-phosphate (GlcN-1-P) to produce N-acetylglucosamine-1-phosphate (GlcNAc-1-P), which is converted into UDP-GlcNAc by the transfer of uridine 5-monophosphate (from uridine 5-triphosphate), a reaction catalyzed by the N-terminal domain. This chain is Bifunctional protein GlmU, found in Alcanivorax borkumensis (strain ATCC 700651 / DSM 11573 / NCIMB 13689 / SK2).